We begin with the raw amino-acid sequence, 540 residues long: MAKTIAFDEEARRGLERGLNALADAVKVTLGPKGRNVVLEKKWGAPTITNDGVSIAKEIELEDPYEKIGAELVKEVAKKTDDVAGDGTTTATVLAQALVREGLRNMAAGANPLGLKRGIEKAVEAVTEHLLKEAKEVETKEQIAATAGISAGDPAIGELIAEAMDKVGKEGVITVEESNTFGLQLELTEGMRFDKGFISGYFATDAERQEAVLEDAYILLVSSKISTVKDLLPLLEKVIQSGKPLAIIAEDVEGEALSTLIVNKIRGTFKSVAIKAPGFGDRRKAMLQDMAILTGGQVISEEVGLSLETAGLELLGQARQVVVTKDETTIVDGAGSKEQIEGRVSQIRAEIESSDSDYDREKLQERLAKLAGGVAVIKAGAATEVELKERKHRIEDAVRNAKAAVEEGIVAGGGAALAQSGKVFETLNLEGDEATGANIVKVALDAPVKQIAINAGLEPGVVAEKVRNSPAGTGLNAATGVYEDLLAAGINDPVKVTRSALQNASSIAALFLTTEAVVADKPEKAGAPVDPTGGMGGMDF.

Residues 29–32, 86–90, G413, 476–478, and D492 contribute to the ATP site; these read TLGP, DGTTT, and NAA.

The protein belongs to the chaperonin (HSP60) family. In terms of assembly, forms a cylinder of 14 subunits composed of two heptameric rings stacked back-to-back. Interacts with the co-chaperonin GroES.

It localises to the cytoplasm. The catalysed reaction is ATP + H2O + a folded polypeptide = ADP + phosphate + an unfolded polypeptide.. Together with its co-chaperonin GroES, plays an essential role in assisting protein folding. The GroEL-GroES system forms a nano-cage that allows encapsulation of the non-native substrate proteins and provides a physical environment optimized to promote and accelerate protein folding. This chain is Chaperonin GroEL, found in Tsukamurella paurometabola (Corynebacterium paurometabolum).